The sequence spans 313 residues: Beta-lactamase BRO-1 (313 aa).

A signal peptide spans 1 to 25; that stretch reads MQRRHFLQKTLLALPIIFSGNLLTG. Cysteine 26 carries N-palmitoyl cysteine lipidation. Cysteine 26 carries the S-diacylglycerol cysteine lipid modification. Serine 90 serves as the catalytic Acyl-ester intermediate. 255–257 contributes to the substrate binding site; that stretch reads KTG.

It belongs to the class-A beta-lactamase family.

The protein localises to the cell membrane. The catalysed reaction is a beta-lactam + H2O = a substituted beta-amino acid. This Moraxella catarrhalis (Branhamella catarrhalis) protein is Beta-lactamase BRO-1 (bla).